We begin with the raw amino-acid sequence, 188 residues long: Large ribosomal subunit protein uL5 (188 aa).

It belongs to the universal ribosomal protein uL5 family. As to quaternary structure, part of the 50S ribosomal subunit; part of the 5S rRNA/L5/L18/L25 subcomplex. Contacts the 5S rRNA and the P site tRNA. Forms a bridge to the 30S subunit in the 70S ribosome.

Its function is as follows. This is one of the proteins that bind and probably mediate the attachment of the 5S RNA into the large ribosomal subunit, where it forms part of the central protuberance. In the 70S ribosome it contacts protein S13 of the 30S subunit (bridge B1b), connecting the 2 subunits; this bridge is implicated in subunit movement. Contacts the P site tRNA; the 5S rRNA and some of its associated proteins might help stabilize positioning of ribosome-bound tRNAs. This Aquifex aeolicus (strain VF5) protein is Large ribosomal subunit protein uL5.